The chain runs to 243 residues: Probable transcriptional regulatory protein LGAS_1276 (243 aa).

Residues 1-22 (MSGHSKWHNIQGRKNAQDAKRG) are disordered.

This sequence belongs to the TACO1 family.

Its subcellular location is the cytoplasm. This chain is Probable transcriptional regulatory protein LGAS_1276, found in Lactobacillus gasseri (strain ATCC 33323 / DSM 20243 / BCRC 14619 / CIP 102991 / JCM 1131 / KCTC 3163 / NCIMB 11718 / NCTC 13722 / AM63).